A 422-amino-acid chain; its full sequence is MKVMVVGSGGREHALAWKLARSPKVQVVYVAPGNGGTALDKRLQNVPITDPEVLAAFAEREGVHFTVVGPEAPLAAGIVDLFRAKGLRIFGPTRAAAQLESSKDFAKAFMQRHGIPTAKYQTFGNAAEAHAYVDREGAPIVIKADGLAAGKGVVVAMTLEEAHGAIDMMLADNRLGDAGARVVIEEFLAGEEASFIVVCDGKDVVAMATSQDHKRLLDGDAGPNTGGMGAYSPAPVVTPTLHARVLREIILPTIRGMEKDGIPYTGFLYAGLMIDADGTPKTLEFNCRMGDPETQPIMARMKTDLFDVLDRAIDGKLDGMELDWDRRTALGVVMAAYNYPDTPRKGDVITGIPKETEDSVTFHAGTTLKDGALTTSGGRVLCVVGLADTVKAAQRAAYGAVEQIQFDGAQYRKDIGHRAIRR.

The region spanning 107-314 is the ATP-grasp domain; sequence KAFMQRHGIP…LFDVLDRAID (208 aa). 133 to 194 serves as a coordination point for ATP; sequence VDREGAPIVI…EEFLAGEEAS (62 aa). Residues Glu284 and Asn286 each coordinate Mg(2+).

The protein belongs to the GARS family. It depends on Mg(2+) as a cofactor. Requires Mn(2+) as cofactor.

It catalyses the reaction 5-phospho-beta-D-ribosylamine + glycine + ATP = N(1)-(5-phospho-beta-D-ribosyl)glycinamide + ADP + phosphate + H(+). It participates in purine metabolism; IMP biosynthesis via de novo pathway; N(1)-(5-phospho-D-ribosyl)glycinamide from 5-phospho-alpha-D-ribose 1-diphosphate: step 2/2. The protein is Phosphoribosylamine--glycine ligase of Ralstonia nicotianae (strain ATCC BAA-1114 / GMI1000) (Ralstonia solanacearum).